A 246-amino-acid chain; its full sequence is Sensory transduction protein LytT (246 aa).

The 117-residue stretch at 4-120 (HIMIAEDERL…RFKIAMNRIR (117 aa)) folds into the Response regulatory domain. Asp55 carries the post-translational modification 4-aspartylphosphate. The HTH LytTR-type domain maps to 136–243 (LVVNLDEKMM…AKGLFDALQG (108 aa)).

In terms of processing, phosphorylated by LytS.

It is found in the cytoplasm. Its function is as follows. Member of the two-component regulatory system LytS/LytT that probably regulates genes involved in cell wall metabolism. The polypeptide is Sensory transduction protein LytT (lytT) (Oceanobacillus iheyensis (strain DSM 14371 / CIP 107618 / JCM 11309 / KCTC 3954 / HTE831)).